A 561-amino-acid polypeptide reads, in one-letter code: uncharacterized protein (561 aa).

Positions D187 to I217 form a coiled coil.

This is an uncharacterized protein from Dictyostelium discoideum (Social amoeba).